The primary structure comprises 937 residues: Lysosomal alpha-glucosidase (937 aa).

Positions 1 to 23 (MMRWPPCSRPLLGVCTLLSLALL) are cleaved as a signal peptide. Positions 24-60 (GHILLHDLEVVPRELRGFSQDEIHQACQPGASSPECR) are excised as a propeptide. The P-type domain occupies 68–118 (TQCDLPPNSRFDCAPDKGITPQQCEARGCCYMPAEWPPDAQMGQPWCFFPP). 3 cysteine pairs are disulfide-bonded: cysteine 70–cysteine 97, cysteine 80–cysteine 96, and cysteine 91–cysteine 114. N-linked (GlcNAc...) asparagine glycans are attached at residues asparagine 127, asparagine 220, asparagine 259, and asparagine 377. Aspartate 391 contacts substrate. Asparagine 457 is a glycosylation site (N-linked (GlcNAc...) asparagine). Aspartate 505 acts as the Nucleophile in catalysis. Glutamate 508 is a catalytic residue. The cysteines at positions 520 and 545 are disulfide-linked. Substrate-binding residues include arginine 587 and aspartate 603. A disulfide bond links cysteine 634 and cysteine 645. An N-linked (GlcNAc...) asparagine glycan is attached at asparagine 639. Substrate is bound at residue histidine 661. Residues asparagine 867, asparagine 888, and asparagine 910 are each glycosylated (N-linked (GlcNAc...) asparagine).

Belongs to the glycosyl hydrolase 31 family.

Its subcellular location is the lysosome. It is found in the lysosome membrane. The enzyme catalyses Hydrolysis of terminal, non-reducing (1-&gt;4)-linked alpha-D-glucose residues with release of alpha-D-glucose.. In terms of biological role, essential for the degradation of glycogen in lysosomes. Has highest activity on alpha-1,4-linked glycosidic linkages, but can also hydrolyze alpha-1,6-linked glucans. In Bos taurus (Bovine), this protein is Lysosomal alpha-glucosidase (GAA).